A 132-amino-acid chain; its full sequence is EF-hand calcium-binding domain-containing protein 10 (132 aa).

2 consecutive EF-hand domains span residues 64-99 (MDNSNTVSMFEMMDMAGRGCISFVQYKEALKNLGLC) and 120-132 (EMNKRMEKMWSMF).

This is EF-hand calcium-binding domain-containing protein 10 (Efcab10) from Mus musculus (Mouse).